Here is a 253-residue protein sequence, read N- to C-terminus: tRNA (guanine-N(1)-)-methyltransferase (253 aa).

Residues Gly111 and 131–136 (LGDFVL) contribute to the S-adenosyl-L-methionine site.

It belongs to the RNA methyltransferase TrmD family. In terms of assembly, homodimer.

It is found in the cytoplasm. The enzyme catalyses guanosine(37) in tRNA + S-adenosyl-L-methionine = N(1)-methylguanosine(37) in tRNA + S-adenosyl-L-homocysteine + H(+). Functionally, specifically methylates guanosine-37 in various tRNAs. In Synechococcus sp. (strain JA-3-3Ab) (Cyanobacteria bacterium Yellowstone A-Prime), this protein is tRNA (guanine-N(1)-)-methyltransferase.